Here is a 163-residue protein sequence, read N- to C-terminus: Putative 4-hydroxy-4-methyl-2-oxoglutarate aldolase (163 aa).

Residues 76–79 and Arg98 contribute to the substrate site; that span reads GDML. Residue Asp99 participates in a divalent metal cation binding.

It belongs to the class II aldolase/RraA-like family. As to quaternary structure, homotrimer. A divalent metal cation is required as a cofactor.

It catalyses the reaction 4-hydroxy-4-methyl-2-oxoglutarate = 2 pyruvate. It carries out the reaction oxaloacetate + H(+) = pyruvate + CO2. Its function is as follows. Catalyzes the aldol cleavage of 4-hydroxy-4-methyl-2-oxoglutarate (HMG) into 2 molecules of pyruvate. Also contains a secondary oxaloacetate (OAA) decarboxylase activity due to the common pyruvate enolate transition state formed following C-C bond cleavage in the retro-aldol and decarboxylation reactions. The protein is Putative 4-hydroxy-4-methyl-2-oxoglutarate aldolase of Pseudomonas putida (strain ATCC 47054 / DSM 6125 / CFBP 8728 / NCIMB 11950 / KT2440).